The primary structure comprises 409 residues: NADH-quinone oxidoreductase subunit D (409 aa).

This sequence belongs to the complex I 49 kDa subunit family. NDH-1 is composed of 14 different subunits. Subunits NuoB, C, D, E, F, and G constitute the peripheral sector of the complex.

It localises to the cell inner membrane. It catalyses the reaction a quinone + NADH + 5 H(+)(in) = a quinol + NAD(+) + 4 H(+)(out). NDH-1 shuttles electrons from NADH, via FMN and iron-sulfur (Fe-S) centers, to quinones in the respiratory chain. The immediate electron acceptor for the enzyme in this species is believed to be ubiquinone. Couples the redox reaction to proton translocation (for every two electrons transferred, four hydrogen ions are translocated across the cytoplasmic membrane), and thus conserves the redox energy in a proton gradient. The protein is NADH-quinone oxidoreductase subunit D of Helicobacter pylori (strain Shi470).